The following is a 568-amino-acid chain: MPSTDLLTLKAFEPYLEILEVYSTKAKNYVNGHCTKYEPWQLIAWSVVWTLLIVWGYEFVFQPESLWSRFKKKCFKLTRKMPIIGRKIQDKLNKTKDDISKNMSFLKVDKEYVKALPSQGLSSSAVLEKLKEYSSMDAFWQEGRASGTVYSGEEKLTELLVKAYGDFAWSNPLHPDIFPGLRKIEAEIVRIACSLFNGGPDSCGCVTSGGTESILMACKAYRDLAFEKGIKTSEIVAPQSAHAAFNKAASYFGMKIVRVPLTKMMEVDVRAMRRAISRNTAMLVCSTPQFPHGVIDPVPEVAKLAVKYKIPLHVDACLGGFLTVFMEKAGYPLEHPFDFRVKGVTSISADTHKYGYAPKGSSLVLYSDKKYRNYQFFVDTDWQGGIYASPTIAGSRPGGISAACWAALMHFGENGYVEATKQIIKTARFLKSELENIKGIFVFGNPQLSVIALGSRDFDIYRLSNLMTAKGWNLNQLQFPPSIHFCITLLHARKRVAIQFLKDIRESVTQIMKNPKAKTTGMGAIYGMAQTTVDRNMVAELSSVFLDSLYSTDTVTQGSQMNGSPKPH.

The Lumenal portion of the chain corresponds to 1–41 (MPSTDLLTLKAFEPYLEILEVYSTKAKNYVNGHCTKYEPWQ). A helical; Signal-anchor for type III membrane protein membrane pass occupies residues 42–62 (LIAWSVVWTLLIVWGYEFVFQ). Topologically, residues 63 to 568 (PESLWSRFKK…SQMNGSPKPH (506 aa)) are cytoplasmic. K353 carries the N6-(pyridoxal phosphate)lysine; alternate modification. Residue K353 is modified to N6-acetyllysine; alternate. Residues Y356 and Y366 each carry the 3'-nitrotyrosine modification. The residue at position 564 (S564) is a Phosphoserine.

This sequence belongs to the group II decarboxylase family. Sphingosine-1-phosphate lyase subfamily. Homodimer. Pyridoxal 5'-phosphate serves as cofactor.

The protein resides in the endoplasmic reticulum membrane. The catalysed reaction is sphinganine 1-phosphate = hexadecanal + phosphoethanolamine. It catalyses the reaction sphing-4-enine 1-phosphate = (2E)-hexadecenal + phosphoethanolamine. Its pathway is lipid metabolism; sphingolipid metabolism. Its function is as follows. Cleaves phosphorylated sphingoid bases (PSBs), such as sphingosine-1-phosphate, into fatty aldehydes and phosphoethanolamine. Elevates stress-induced ceramide production and apoptosis. Required for global lipid homeostasis in liver and cholesterol homeostasis in fibroblasts. Involved in the regulation of pro-inflammatory response and neutrophil trafficking. Modulates neuronal autophagy via phosphoethanolamine production which regulates accumulation of aggregate-prone proteins such as APP. Seems to play a role in establishing neuronal contact sites and axonal maintenance. The protein is Sphingosine-1-phosphate lyase 1 of Pongo abelii (Sumatran orangutan).